We begin with the raw amino-acid sequence, 429 residues long: G2/mitotic-specific cyclin-B1 (429 aa).

The span at 1 to 14 shows a compositional bias: polar residues; it reads MALRVTRNTKLNTE. Disordered stretches follow at residues 1–21 and 71–128; these read MALR…KVSM and TGKV…PMET. At K73 the chain carries N6-acetyllysine. Residues 92 to 106 are compositionally biased toward acidic residues; the sequence is PEVELAEPEPEPEPV. S122 bears the Phosphoserine; by CDK1 mark. S124 carries the phosphoserine modification. S129 bears the Phosphoserine; by PLK1 mark. Residue S143 is modified to Phosphoserine. 2 interaction with CDK2 regions span residues 165–173 and 254–257; these read EYVKDIYAY and YEEM. Position 317 is a phosphothreonine (T317).

Belongs to the cyclin family. Cyclin AB subfamily. Interacts with the CDC2 protein kinase to form a serine/threonine kinase holoenzyme complex also known as maturation promoting factor (MPF). The cyclin subunit imparts substrate specificity to the complex. Binds HEI10. Interacts with catalytically active RALBP1 and CDC2 during mitosis to form an endocytotic complex during interphase. Interacts with CCNF; interaction is required for nuclear localization. Interacts with CDK5RAP3. Interacts with RFPL4A and UBE2A. Interacts with INCA1. Ubiquitinated by the SCF(NIPA) complex during interphase, leading to its destruction. Not ubiquitinated during G2/M phases. In terms of processing, phosphorylated by PLK1 at Ser-129 on centrosomes during prophase: phosphorylation by PLK1 does not cause nuclear import. Phosphorylation at Ser-143 was also reported to be mediated by PLK1 but Ser-129 seems to be the primary phosphorylation site.

The protein localises to the cytoplasm. The protein resides in the nucleus. Its subcellular location is the cytoskeleton. It is found in the microtubule organizing center. It localises to the centrosome. Functionally, essential for the control of the cell cycle at the G2/M (mitosis) transition. The polypeptide is G2/mitotic-specific cyclin-B1 (CCNB1) (Cricetulus griseus (Chinese hamster)).